A 438-amino-acid polypeptide reads, in one-letter code: tRNA-2-methylthio-N(6)-dimethylallyladenosine synthase (438 aa).

Positions Lys-4 to Ala-120 constitute an MTTase N-terminal domain. 6 residues coordinate [4Fe-4S] cluster: Cys-13, Cys-49, Cys-83, Cys-158, Cys-162, and Cys-165. The Radical SAM core domain occupies Gly-144–Glu-377. Residues Glu-377–Leu-438 form the TRAM domain.

The protein belongs to the methylthiotransferase family. MiaB subfamily. As to quaternary structure, monomer. It depends on [4Fe-4S] cluster as a cofactor.

It is found in the cytoplasm. The catalysed reaction is N(6)-dimethylallyladenosine(37) in tRNA + (sulfur carrier)-SH + AH2 + 2 S-adenosyl-L-methionine = 2-methylsulfanyl-N(6)-dimethylallyladenosine(37) in tRNA + (sulfur carrier)-H + 5'-deoxyadenosine + L-methionine + A + S-adenosyl-L-homocysteine + 2 H(+). Functionally, catalyzes the methylthiolation of N6-(dimethylallyl)adenosine (i(6)A), leading to the formation of 2-methylthio-N6-(dimethylallyl)adenosine (ms(2)i(6)A) at position 37 in tRNAs that read codons beginning with uridine. The chain is tRNA-2-methylthio-N(6)-dimethylallyladenosine synthase from Trichlorobacter lovleyi (strain ATCC BAA-1151 / DSM 17278 / SZ) (Geobacter lovleyi).